Consider the following 122-residue polypeptide: Large ribosomal subunit protein uL14 (122 aa).

It belongs to the universal ribosomal protein uL14 family. As to quaternary structure, part of the 50S ribosomal subunit. Forms a cluster with proteins L3 and L19. In the 70S ribosome, L14 and L19 interact and together make contacts with the 16S rRNA in bridges B5 and B8.

Binds to 23S rRNA. Forms part of two intersubunit bridges in the 70S ribosome. The polypeptide is Large ribosomal subunit protein uL14 (Chlorobium limicola (strain DSM 245 / NBRC 103803 / 6330)).